A 593-amino-acid polypeptide reads, in one-letter code: UvrABC system protein C (593 aa).

Residues 17–94 (MEPGCYLMKD…IKQYQPRYNI (78 aa)) form the GIY-YIG domain. The UVR domain occupies 199-234 (KTILKSLEERMLTASESLDFERAKEYRDLIQHIQNL).

This sequence belongs to the UvrC family. In terms of assembly, interacts with UvrB in an incision complex.

The protein localises to the cytoplasm. Its function is as follows. The UvrABC repair system catalyzes the recognition and processing of DNA lesions. UvrC both incises the 5' and 3' sides of the lesion. The N-terminal half is responsible for the 3' incision and the C-terminal half is responsible for the 5' incision. The chain is UvrABC system protein C from Staphylococcus aureus (strain bovine RF122 / ET3-1).